The primary structure comprises 849 residues: Villin-1 (849 aa).

Gelsolin-like repeat units lie at residues I30–L107, R147–K213, V262–F335, Q405–F475, and A527–L566. Residues E739–R849 form a disordered region. Composition is skewed to low complexity over residues K747–T782 and P791–S823.

Belongs to the villin/gelsolin family. In terms of tissue distribution, expressed in roots, young leaves, and inflorescences, mostly in the vasculature of roots, leaves, and filaments of the anthers. Also detected in guard cells.

It is found in the cytoplasm. The protein resides in the cytoskeleton. Functionally, ca(2+)-independent actin-binding protein. Binds actin microfilaments (MFs). Involved in actin filament bundling, severing and capping. Caps the barbed end of actin filaments and protects them from disassembly. Promotes VLN3-mediated MF severing. This is Villin-1 from Oryza sativa subsp. japonica (Rice).